Here is a 432-residue protein sequence, read N- to C-terminus: Acetylserotonin O-methyltransferase (432 aa).

S-adenosyl-L-methionine contacts are provided by residues Y146, W163, D209, G235 to F237, and R252. Catalysis depends on H255, which acts as the Proton donor/acceptor. Residues D256, N302, and Q306 each contribute to the substrate site. The interval V373–K432 is disordered.

This sequence belongs to the class I-like SAM-binding methyltransferase superfamily. Cation-independent O-methyltransferase family. Homodimer. In terms of tissue distribution, expressed predominantly in the pineal gland (at protein level). Very low expression, if any, in the retina.

It carries out the reaction N-acetylserotonin + S-adenosyl-L-methionine = melatonin + S-adenosyl-L-homocysteine + H(+). It participates in aromatic compound metabolism; melatonin biosynthesis; melatonin from serotonin: step 1/2. Functionally, catalyzes the transfer of a methyl group onto N-acetylserotonin, producing melatonin (N-acetyl-5-methoxytryptamine). The chain is Acetylserotonin O-methyltransferase (Asmt) from Rattus norvegicus (Rat).